Here is a 124-residue protein sequence, read N- to C-terminus: MPTIQQLVRKGRQDKVAKTKTAALKGSPQRRGVCTRVYTTTPKKPNSALRKVARVKLTSGIEVTAYIPGEGHNLQEHSIVLVRGGRVKDLPGVRYKIIRGSADTQGVKNRKQARSRYGAKKEKS.

Residues 1 to 30 (MPTIQQLVRKGRQDKVAKTKTAALKGSPQR) are disordered. D89 carries the 3-methylthioaspartic acid modification. Residues 102–124 (ADTQGVKNRKQARSRYGAKKEKS) form a disordered region. Residues 108 to 118 (KNRKQARSRYG) are compositionally biased toward basic residues.

This sequence belongs to the universal ribosomal protein uS12 family. In terms of assembly, part of the 30S ribosomal subunit. Contacts proteins S8 and S17. May interact with IF1 in the 30S initiation complex.

In terms of biological role, with S4 and S5 plays an important role in translational accuracy. Functionally, interacts with and stabilizes bases of the 16S rRNA that are involved in tRNA selection in the A site and with the mRNA backbone. Located at the interface of the 30S and 50S subunits, it traverses the body of the 30S subunit contacting proteins on the other side and probably holding the rRNA structure together. The combined cluster of proteins S8, S12 and S17 appears to hold together the shoulder and platform of the 30S subunit. This chain is Small ribosomal subunit protein uS12, found in Saccharopolyspora erythraea (strain ATCC 11635 / DSM 40517 / JCM 4748 / NBRC 13426 / NCIMB 8594 / NRRL 2338).